The sequence spans 1396 residues: G2/mitotic-specific cyclin-B3 (1396 aa).

Disordered stretches follow at residues 1–64 (MPPP…TNAS), 259–398 (KEKP…PQME), and 477–500 (TTEK…PGEL). The span at 10–34 (SKLETEKAQSNKITPREEQQSEKIG) shows a compositional bias: basic and acidic residues. A D-box motif is present at residues 54–62 (RSVFEDVTN). The segment covering 264–273 (VKKPHFRKKK) has biased composition (basic residues). The span at 306–315 (LQENTNNKDA) shows a compositional bias: polar residues. Serine 703 is subject to Phosphoserine. The disordered stretch occupies residues 775–796 (VDEPLSHQSPHIQNHSDTTKEA). A compositionally biased stretch (polar residues) spans 780-790 (SHQSPHIQNHS).

Belongs to the cyclin family. Cyclin AB subfamily. As to quaternary structure, interacts with CDK2 kinase. Ubiquitinated. Ubiquitination leads to its degradation during anaphase entry, after degradation of CCNB1. As to expression, expressed in testis. Also expressed in the fetal ovary, but not in the adult.

The protein localises to the nucleus. In terms of biological role, cyclins are positive regulatory subunits of the cyclin-dependent kinases (CDKs), and thereby play an essential role in the control of the cell cycle, notably via their destruction during cell division. Its tissue specificity suggest that it may be required during early meiotic prophase I. This chain is G2/mitotic-specific cyclin-B3 (Ccnb3), found in Mus musculus (Mouse).